We begin with the raw amino-acid sequence, 628 residues long: Chaperone protein HtpG (628 aa).

Residues 1–337 (MSEKKYTFET…SADLPLNVSR (337 aa)) are a; substrate-binding. Residues 338-554 (EILQHNKVID…DYGMSLHMQK (217 aa)) are b. The c stretch occupies residues 555–628 (MMEEAGQGFM…FVKLVNKYIR (74 aa)).

It belongs to the heat shock protein 90 family. As to quaternary structure, homodimer.

It is found in the cytoplasm. In terms of biological role, molecular chaperone. Has ATPase activity. This Francisella tularensis subsp. novicida (strain U112) protein is Chaperone protein HtpG.